A 381-amino-acid chain; its full sequence is Mannitol-1-phosphate 5-dehydrogenase (381 aa).

NAD(+) is bound at residue 3–14 (TLHFGAGNIGRG).

This sequence belongs to the mannitol dehydrogenase family.

The enzyme catalyses D-mannitol 1-phosphate + NAD(+) = beta-D-fructose 6-phosphate + NADH + H(+). The protein is Mannitol-1-phosphate 5-dehydrogenase of Aeromonas salmonicida (strain A449).